Reading from the N-terminus, the 142-residue chain is Baculoviral IAP repeat-containing protein 5 (142 aa).

One copy of the BIR repeat lies at 18–88; sequence RISTFKNWPF…KHSSGCAFLS (71 aa). Ser20 carries the phosphoserine; by AURKC modification. Lys23 is subject to N6-acetyllysine. Phosphothreonine; by CDK1 and CDK15 is present on Thr34. Thr48 carries the phosphothreonine modification. Residues Cys57, Cys60, His77, and Cys84 each coordinate Zn(2+). Residues Lys90, Lys110, Lys112, and Lys115 each carry the N6-acetyllysine modification. A Phosphothreonine; by AURKB modification is found at Thr117. Lys129 carries the N6-acetyllysine modification.

The protein belongs to the IAP family. In terms of assembly, monomer or homodimer. Exists as a homodimer in the apo state and as a monomer in the CPC-bound state. The monomer protects cells against apoptosis more efficiently than the dimer. Only the dimeric form is capable of enhancing tubulin stability in cells. When phosphorylated, interacts with LAMTOR5/HBXIP; the resulting complex binds pro-CASP9, as well as active CASP9, but much less efficiently. Component of the chromosomal passenger complex (CPC) composed of at least BIRC5/survivin, CDCA8/borealin, INCENP, AURKB or AURKC; in the complex forms a triple-helix bundle-based subcomplex with INCENP and CDCA8. Interacts with JTB. Interacts (via BIR domain) with histone H3 phosphorylated at 'Thr-3' (H3pT3). Interacts with EVI5. Interacts with GTP-bound RAN in both the S and M phases of the cell cycle. Interacts with USP9X. Interacts with tubulin. Interacts with BIRC2/c-IAP1. The acetylated form at Lys-129 interacts with STAT3. The monomeric form deacetylated at Lys-129 interacts with XPO1/CRM1. The monomeric form interacts with XIAP/BIRC4. Both the dimeric and monomeric form can interact with DIABLO/SMAC. Interacts with BIRC6/bruce. Interacts with FBXL7; this interaction facilitates the polyubiquitination and subsequent proteasomal degradation of BIRC5 by the SCF(FBXL7) E3 ubiquitin-protein ligase complex. Post-translationally, ubiquitinated by the Cul9-RING ubiquitin-protein ligase complex, leading to its degradation. Ubiquitination is required for centrosomal targeting. Deubiquitinated by USP35 or USP38; leading to stabilization. Acetylation at Lys-129 results in its homodimerization, while deacetylation promotes the formation of monomers which heterodimerize with XPO1/CRM1 which facilitates its nuclear export. The acetylated form represses STAT3 transactivation. The dynamic equilibrium between its acetylation and deacetylation at Lys-129 determines its interaction with XPO1/CRM1, its subsequent subcellular localization, and its ability to inhibit STAT3 transactivation. In terms of processing, in vitro phosphorylation at Thr-117 by AURKB prevents interaction with INCENP and localization to mitotic chromosomes. Phosphorylation at Thr-48 by CK2 is critical for its mitotic and anti-apoptotic activities. Phosphorylation at Thr-34 by CDK15 is critical for its anti-apoptotic activity. Phosphorylation at Ser-20 by AURKC is critical for regulation of proper chromosome alignment and segregation, and possibly cytokinesis.

It localises to the cytoplasm. The protein localises to the nucleus. Its subcellular location is the chromosome. The protein resides in the centromere. It is found in the cytoskeleton. It localises to the spindle. The protein localises to the kinetochore. Its subcellular location is the midbody. Its function is as follows. Multitasking protein that has dual roles in promoting cell proliferation and preventing apoptosis. Component of a chromosome passage protein complex (CPC) which is essential for chromosome alignment and segregation during mitosis and cytokinesis. Acts as an important regulator of the localization of this complex; directs CPC movement to different locations from the inner centromere during prometaphase to midbody during cytokinesis and participates in the organization of the center spindle by associating with polymerized microtubules. Involved in the recruitment of CPC to centromeres during early mitosis via association with histone H3 phosphorylated at 'Thr-3' (H3pT3) during mitosis. The complex with RAN plays a role in mitotic spindle formation by serving as a physical scaffold to help deliver the RAN effector molecule TPX2 to microtubules. May counteract a default induction of apoptosis in G2/M phase. The acetylated form represses STAT3 transactivation of target gene promoters. May play a role in neoplasia. Inhibitor of CASP3 and CASP7. Essential for the maintenance of mitochondrial integrity and function. The protein is Baculoviral IAP repeat-containing protein 5 (BIRC5) of Felis catus (Cat).